We begin with the raw amino-acid sequence, 835 residues long: Adhesion G protein-coupled receptor E5 (835 aa).

Positions 1-20 (MGGRVFLAFCVWLTLPGAET) are cleaved as a signal peptide. Residues 21 to 552 (QDSRGCARWC…EDWKLTLITR (532 aa)) are Extracellular-facing. The EGF-like 1 domain occupies 22–63 (DSRGCARWCPQNSSCVNATACRCNPGFSSFSEIITTPTETCD). Disulfide bonds link cysteine 26–cysteine 36, cysteine 30–cysteine 42, cysteine 44–cysteine 62, cysteine 68–cysteine 82, cysteine 76–cysteine 91, cysteine 93–cysteine 114, cysteine 120–cysteine 133, cysteine 127–cysteine 142, cysteine 144–cysteine 158, cysteine 164–cysteine 177, cysteine 171–cysteine 186, cysteine 188–cysteine 207, cysteine 213–cysteine 226, cysteine 220–cysteine 235, and cysteine 237–cysteine 256. 2 N-linked (GlcNAc...) asparagine glycosylation sites follow: asparagine 33 and asparagine 38. The 52-residue stretch at 64–115 (DINECATPSKVSCGKFSDCWNTEGSYDCVCSPGYEPVSGAKTFKNESENTCQ) folds into the EGF-like 2; calcium-binding domain. N-linked (GlcNAc...) asparagine glycosylation is present at asparagine 108. Residues 116 to 159 (DVDECQQNPRLCKSYGTCVNTLGSYTCQCLPGFKFIPEDPKVCT) enclose the EGF-like 3; calcium-binding domain. The EGF-like 4; calcium-binding domain maps to 160–208 (DVNECTSGQNPCHSSTHCLNNVGSYQCRCRPGWQPIPGSPNGPNNTVCE). A glycan (N-linked (GlcNAc...) asparagine) is linked at asparagine 203. One can recognise an EGF-like 5; calcium-binding domain in the interval 209–257 (DVDECSSGQHQCDSSTVCFNTVGSYSCRCRPGWKPRHGIPNNQKDTVCE). A GAIN-B domain is found at 349–543 (PFTYISPSNT…AILMAHYDVE (195 aa)). N-linked (GlcNAc...) asparagine glycosylation is found at asparagine 371, asparagine 406, asparagine 413, asparagine 453, and asparagine 520. 2 disulfide bridges follow: cysteine 495–cysteine 525 and cysteine 513–cysteine 527. Positions 495 to 543 (CAFWKSDSDRGGHWATEGCQVLGSKNGSTTCQCSHLSSFAILMAHYDVE) are GPS. Residues 553–572 (VGLALSLFCLLLCILTFLLV) traverse the membrane as a helical segment. Over 573–581 (RPIQGSRTT) the chain is Cytoplasmic. The chain crosses the membrane as a helical span at residues 582–601 (IHLHLCICLFVGSTIFLAGI). Over 602 to 620 (ENEGGQVGLRCRLVAGLLH) the chain is Extracellular. The helical transmembrane segment at 621–642 (YCFLAAFCWMSLEGLELYFLVV) threads the bilayer. The Cytoplasmic portion of the chain corresponds to 643–653 (RVFQGQGLSTR). Residues 654 to 674 (WLCLIGYGVPLLIVGVSAAIY) traverse the membrane as a helical segment. Topologically, residues 675-691 (SKGYGRPRYCWLDFEQG) are extracellular. Residues 692 to 712 (FLWSFLGPVTFIILCNAVIFV) traverse the membrane as a helical segment. Residues 713-739 (TTVWKLTQKFSEINPDMKKLKKARALT) lie on the Cytoplasmic side of the membrane. Residues 740 to 760 (ITAIAQLFLLGCTWVFGLFIF) traverse the membrane as a helical segment. Residues 761–766 (DDRSLV) are Extracellular-facing. Residues 767–789 (LTYVFTILNCLQGAFLYLLHCLL) traverse the membrane as a helical segment. Residues 790–835 (NKKVREEYRKWACLVAGGSKYSEFTSTTSGTGHNQTRALRASESGI) lie on the Cytoplasmic side of the membrane. Positions 814-826 (TSTTSGTGHNQTR) are enriched in polar residues. Residues 814 to 835 (TSTTSGTGHNQTRALRASESGI) form a disordered region. A Phosphoserine modification is found at serine 815. Position 816 is a phosphothreonine (threonine 816). Serine 818 bears the Phosphoserine mark. Phosphothreonine is present on threonine 825. Phosphoserine is present on residues serine 831 and serine 833.

Belongs to the G-protein coupled receptor 2 family. LN-TM7 subfamily. Forms a heterodimer, consisting of a large extracellular region (alpha subunit) non-covalently linked to a seven-transmembrane moiety (beta subunit). Interacts with complement decay-accelerating factor (DAF). The largest isoform (isoform 1) interacts with chondroitin sulfate. Proteolytically cleaved into 2 subunits, an extracellular alpha subunit and a seven-transmembrane subunit. In terms of tissue distribution, broadly expressed, found on most hematopoietic cells, including activated lymphocytes, monocytes, macrophages, dendritic cells, and granulocytes. Expressed also abundantly by smooth muscle cells. Expressed in thyroid, colorectal, gastric, esophageal and pancreatic carcinomas too. Expression are increased under inflammatory conditions in the CNS of multiple sclerosis and in synovial tissue of patients with rheumatoid arthritis. Increased expression of CD97 in the synovium is accompanied by detectable levels of soluble CD97 in the synovial fluid.

It localises to the cell membrane. Its subcellular location is the secreted. It is found in the extracellular space. Functionally, receptor potentially involved in both adhesion and signaling processes early after leukocyte activation. Plays an essential role in leukocyte migration. The protein is Adhesion G protein-coupled receptor E5 of Homo sapiens (Human).